The primary structure comprises 290 residues: Translin-associated protein X (290 aa).

The disordered stretch occupies residues 1–31 (MNGKEGPGGFRKRKHDTFPHNQRREGKDASL). Positions 16-28 (DTFPHNQRREGKD) are enriched in basic and acidic residues. An interaction with C1D region spans residues 73–208 (LLHRITSAPD…MRMCINSVGN (136 aa)). The Mg(2+) site is built by Glu129 and Glu197. Lys279 is covalently cross-linked (Glycyl lysine isopeptide (Lys-Gly) (interchain with G-Cter in SUMO2)).

This sequence belongs to the translin family. Ring-shaped heterooctamer of six TSN and two TSNAX subunits. Interacts with GOLGA3, TSNAXIP1, SUN1 and AKAP9. Interacts with the homodimeric form of C1D following gamma-radiation. Interacts with TSN and C1D in a mutually exclusive manner. Post-translationally, sumoylated with SUMO1. As to expression, detected in heart, brain, lung, liver, kidney and testis.

Its subcellular location is the cytoplasm. The protein localises to the perinuclear region. The protein resides in the golgi apparatus. It localises to the nucleus. Acts in combination with TSN as an endonuclease involved in the activation of the RNA-induced silencing complex (RISC). Possible role in spermatogenesis. This Mus musculus (Mouse) protein is Translin-associated protein X (Tsnax).